A 108-amino-acid chain; its full sequence is Insulin-like peptide 17 (108 aa).

An N-terminal signal peptide occupies residues 1–19; the sequence is MFSTRGVLLLLSLMAAVAA.

It belongs to the insulin family. Expressed in head neurons and the uterus.

It is found in the secreted. Involved in the regulation of the larval diapause. This chain is Insulin-like peptide 17, found in Caenorhabditis elegans.